Consider the following 198-residue polypeptide: Proteasome subunit beta 1 (198 aa).

The propeptide at 1-8 (MSMYMPGA) is removed in mature form; by autocatalysis. The active-site Nucleophile is T9.

Belongs to the peptidase T1B family. In terms of assembly, the 20S proteasome core is composed of 14 alpha and 14 beta subunits that assemble into four stacked heptameric rings, resulting in a barrel-shaped structure. The two inner rings, each composed of seven catalytic beta subunits, are sandwiched by two outer rings, each composed of seven alpha subunits. The catalytic chamber with the active sites is on the inside of the barrel. Has a gated structure, the ends of the cylinder being occluded by the N-termini of the alpha-subunits. Is capped at one or both ends by the proteasome regulatory ATPase, PAN.

The protein resides in the cytoplasm. It catalyses the reaction Cleavage of peptide bonds with very broad specificity.. The formation of the proteasomal ATPase PAN-20S proteasome complex, via the docking of the C-termini of PAN into the intersubunit pockets in the alpha-rings, triggers opening of the gate for substrate entry. Interconversion between the open-gate and close-gate conformations leads to a dynamic regulation of the 20S proteasome proteolysis activity. Its function is as follows. Component of the proteasome core, a large protease complex with broad specificity involved in protein degradation. This Nitrosopumilus maritimus (strain SCM1) protein is Proteasome subunit beta 1.